Consider the following 135-residue polypeptide: U-scoloptoxin(22)-Er1a (135 aa).

The signal sequence occupies residues 1–24; the sequence is MAVILKHLAIILLVFVIEIKMGQG. Residues 61–135 are disordered; the sequence is PQITFSTDWG…RSPRYLPTII (75 aa). A compositionally biased stretch (basic and acidic residues) spans 75-127; sequence SVNEDREAAERERSPQMKRSEHEEQLMAKDEMKRFQEERNPSSDDKIAIDKRS.

Belongs to the scoloptoxin-22 family. In terms of tissue distribution, expressed by the venom gland.

It localises to the secreted. The chain is U-scoloptoxin(22)-Er1a from Ethmostigmus rubripes (Giant centipede).